The primary structure comprises 880 residues: Leucine--tRNA ligase (880 aa).

Positions 46–56 (PYPSGALHMGH) match the 'HIGH' region motif. Positions 638-642 (KMSKS) match the 'KMSKS' region motif. Lysine 641 is a binding site for ATP.

Belongs to the class-I aminoacyl-tRNA synthetase family.

Its subcellular location is the cytoplasm. It catalyses the reaction tRNA(Leu) + L-leucine + ATP = L-leucyl-tRNA(Leu) + AMP + diphosphate. This is Leucine--tRNA ligase from Xanthomonas oryzae pv. oryzae (strain MAFF 311018).